The primary structure comprises 111 residues: Cytochrome c oxidase subunit 6A1, mitochondrial (111 aa).

The N-terminal 26 residues, 1 to 26 (MASAVLSASRVSRPLGRALPGLRRPM), are a transit peptide targeting the mitochondrion. Residues 27-36 (SSGAHGEEGS) are Mitochondrial matrix-facing. A helical membrane pass occupies residues 37–61 (ARMWKALTYFVALPGVGVSMLNVFL). Residues 62 to 111 (KSRHEEHERPPFVAYPHLRIRTKPFPWGDGNHTLFHNPHVNPLPTGYEDE) lie on the Mitochondrial intermembrane side of the membrane.

This sequence belongs to the cytochrome c oxidase subunit 6A family. In terms of assembly, component of the cytochrome c oxidase (complex IV, CIV), a multisubunit enzyme composed of 14 subunits. The complex is composed of a catalytic core of 3 subunits MT-CO1, MT-CO2 and MT-CO3, encoded in the mitochondrial DNA, and 11 supernumerary subunits COX4I, COX5A, COX5B, COX6A, COX6B, COX6C, COX7A, COX7B, COX7C, COX8 and NDUFA4, which are encoded in the nuclear genome. The complex exists as a monomer or a dimer and forms supercomplexes (SCs) in the inner mitochondrial membrane with NADH-ubiquinone oxidoreductase (complex I, CI) and ubiquinol-cytochrome c oxidoreductase (cytochrome b-c1 complex, complex III, CIII), resulting in different assemblies (supercomplex SCI(1)III(2)IV(1) and megacomplex MCI(2)III(2)IV(2)).

Its subcellular location is the mitochondrion inner membrane. It functions in the pathway energy metabolism; oxidative phosphorylation. Functionally, component of the cytochrome c oxidase, the last enzyme in the mitochondrial electron transport chain which drives oxidative phosphorylation. The respiratory chain contains 3 multisubunit complexes succinate dehydrogenase (complex II, CII), ubiquinol-cytochrome c oxidoreductase (cytochrome b-c1 complex, complex III, CIII) and cytochrome c oxidase (complex IV, CIV), that cooperate to transfer electrons derived from NADH and succinate to molecular oxygen, creating an electrochemical gradient over the inner membrane that drives transmembrane transport and the ATP synthase. Cytochrome c oxidase is the component of the respiratory chain that catalyzes the reduction of oxygen to water. Electrons originating from reduced cytochrome c in the intermembrane space (IMS) are transferred via the dinuclear copper A center (CU(A)) of subunit 2 and heme A of subunit 1 to the active site in subunit 1, a binuclear center (BNC) formed by heme A3 and copper B (CU(B)). The BNC reduces molecular oxygen to 2 water molecules unsing 4 electrons from cytochrome c in the IMS and 4 protons from the mitochondrial matrix. The polypeptide is Cytochrome c oxidase subunit 6A1, mitochondrial (Cox6a1) (Mus musculus (Mouse)).